The following is a 261-amino-acid chain: MAQENKQNSRTAEHLTFKLDQFEGPLDLLLHLIKQNEMDIYDIQVAEITSQYIDYLHQMQDLRLDIAGEYLVIAATLLNIKSKMLLPVEQEQQVEEDYVDPREDLVQQLVSHQLYQEVAAKFHVMEKQRMELFSREQAVNEDVTYEVSEGTTIDLLQKAFAKLMARKKVKKIKKIKRKIIPERYTIKEEIENIEHTLKMHKGTMNFTDLFDFDGEVEVEKVVTSFLALLELVRVGRVSASQEENNGPILMTYEGKAEEDAI.

Belongs to the ScpA family. As to quaternary structure, component of a cohesin-like complex composed of ScpA, ScpB and the Smc homodimer, in which ScpA and ScpB bind to the head domain of Smc. The presence of the three proteins is required for the association of the complex with DNA.

The protein localises to the cytoplasm. Its function is as follows. Participates in chromosomal partition during cell division. May act via the formation of a condensin-like complex containing Smc and ScpB that pull DNA away from mid-cell into both cell halves. This is Segregation and condensation protein A from Ligilactobacillus salivarius (strain UCC118) (Lactobacillus salivarius).